Here is a 172-residue protein sequence, read N- to C-terminus: Disulfide bond formation protein B (172 aa).

Over Met-1 to Ser-16 the chain is Cytoplasmic. Residues Trp-17 to Phe-33 traverse the membrane as a helical segment. The Periplasmic segment spans residues Phe-34–Val-51. Cys-43 and Cys-46 are joined by a disulfide. A helical transmembrane segment spans residues Ala-52–Pro-67. Residues Asn-68–Trp-74 lie on the Cytoplasmic side of the membrane. The chain crosses the membrane as a helical span at residues Leu-75–Leu-92. Topologically, residues Gln-93–Gln-147 are periplasmic. Cys-107 and Cys-133 are joined by a disulfide. A helical membrane pass occupies residues Trp-148–Ala-166. Residues Gln-167–Lys-172 lie on the Cytoplasmic side of the membrane.

It belongs to the DsbB family.

The protein localises to the cell inner membrane. Functionally, required for disulfide bond formation in some periplasmic proteins. Acts by oxidizing the DsbA protein. The chain is Disulfide bond formation protein B from Vibrio vulnificus (strain CMCP6).